Reading from the N-terminus, the 432-residue chain is Putative D-alanyl-D-alanine carboxypeptidase (432 aa).

Residues 7 to 25 (ATVLLTFSLSAFAVEYPVL) traverse the membrane as a helical; Signal-anchor segment.

This sequence belongs to the peptidase S12 family. YfeW subfamily.

The protein localises to the cell inner membrane. The enzyme catalyses Preferential cleavage: (Ac)2-L-Lys-D-Ala-|-D-Ala. Also transpeptidation of peptidyl-alanyl moieties that are N-acyl substituents of D-alanine.. This chain is Putative D-alanyl-D-alanine carboxypeptidase, found in Salmonella heidelberg (strain SL476).